The following is a 282-amino-acid chain: MDDHVEHNYNTSLEEVHFKSLSDCLQSSLVMDYNSLEKVFKFSPYSSPFQSVSPSVNNPYLNLTSNSPVVSSSSNEGEPKENTNDKSDQMEDNEGDLHGVGESSKQLTKQGKKKGEKKEREVRVAFMTKSEIDHLEDGYRWRKYGQKAVKNSPYPRSYYRCTTQKCNVKKRVERSFQDPSIVITTYEGKHNHPIPSTLRGTVAAEHLLVHRGGGGSLLHSFPRHHQDFLMMKHSPANYQSVGSLSYEHGHGTSSYNFNNNQPVVDYGLLQDIVPSMFSKNES.

The segment at 63-121 (LTSNSPVVSSSSNEGEPKENTNDKSDQMEDNEGDLHGVGESSKQLTKQGKKKGEKKERE) is disordered. Positions 65 to 75 (SNSPVVSSSSN) are enriched in low complexity. The span at 77–99 (GEPKENTNDKSDQMEDNEGDLHG) shows a compositional bias: basic and acidic residues. The WRKY DNA-binding region spans 130–195 (SEIDHLEDGY…YEGKHNHPIP (66 aa)).

The protein belongs to the WRKY group II-c family.

It localises to the nucleus. Its function is as follows. Transcription factor. Interacts specifically with the W box (5'-(T)TGAC[CT]-3'), a frequently occurring elicitor-responsive cis-acting element. This is WRKY transcription factor 71 (WRKY71) from Arabidopsis thaliana (Mouse-ear cress).